Here is a 222-residue protein sequence, read N- to C-terminus: 7-cyano-7-deazaguanine synthase (222 aa).

8-18 (LSGGLDSATCL) lines the ATP pocket. Zn(2+) contacts are provided by C187, C197, C200, and C203.

It belongs to the QueC family. Zn(2+) is required as a cofactor.

It carries out the reaction 7-carboxy-7-deazaguanine + NH4(+) + ATP = 7-cyano-7-deazaguanine + ADP + phosphate + H2O + H(+). It functions in the pathway purine metabolism; 7-cyano-7-deazaguanine biosynthesis. In terms of biological role, catalyzes the ATP-dependent conversion of 7-carboxy-7-deazaguanine (CDG) to 7-cyano-7-deazaguanine (preQ(0)). The chain is 7-cyano-7-deazaguanine synthase from Alcanivorax borkumensis (strain ATCC 700651 / DSM 11573 / NCIMB 13689 / SK2).